Consider the following 435-residue polypeptide: Ribosomal protein uS12 methylthiotransferase RimO (435 aa).

Residues His-3–Pro-113 enclose the MTTase N-terminal domain. Positions 12, 48, 77, 144, 148, and 151 each coordinate [4Fe-4S] cluster. The region spanning Leu-130–Asn-367 is the Radical SAM core domain. A TRAM domain is found at Lys-370–Val-435.

It belongs to the methylthiotransferase family. RimO subfamily. The cofactor is [4Fe-4S] cluster.

It is found in the cytoplasm. The catalysed reaction is L-aspartate(89)-[ribosomal protein uS12]-hydrogen + (sulfur carrier)-SH + AH2 + 2 S-adenosyl-L-methionine = 3-methylsulfanyl-L-aspartate(89)-[ribosomal protein uS12]-hydrogen + (sulfur carrier)-H + 5'-deoxyadenosine + L-methionine + A + S-adenosyl-L-homocysteine + 2 H(+). In terms of biological role, catalyzes the methylthiolation of an aspartic acid residue of ribosomal protein uS12. The chain is Ribosomal protein uS12 methylthiotransferase RimO from Legionella pneumophila (strain Lens).